A 193-amino-acid polypeptide reads, in one-letter code: Chaperone protein TorD (193 aa).

The protein belongs to the TorD/DmsD family. TorD subfamily.

The protein resides in the cytoplasm. In terms of biological role, involved in the biogenesis of TorA. Acts on TorA before the insertion of the molybdenum cofactor and, as a result, probably favors a conformation of the apoenzyme that is competent for acquiring the cofactor. The chain is Chaperone protein TorD from Actinobacillus succinogenes (strain ATCC 55618 / DSM 22257 / CCUG 43843 / 130Z).